The following is a 798-amino-acid chain: Neuroligin-1 (798 aa).

The N-terminal stretch at 1–17 (MERIYLLLLLFLPRIRS) is a signal peptide. The Extracellular segment spans residues 18–685 (YDVRSVTTSW…AAGSFTGKAL (668 aa)). An intrachain disulfide couples C86 to C125. 3 N-linked (GlcNAc...) asparagine glycosylation sites follow: N164, N292, and N315. Residues C288 and C307 are joined by a disulfide bond. Residues 636-676 (ANLPFPPPPMPPSPPPELTTKPKPSESPTTLQTTTESEKAA) form a disordered region. The span at 639 to 652 (PFPPPPMPPSPPPE) shows a compositional bias: pro residues. Positions 653–665 (LTTKPKPSESPTT) are enriched in low complexity. The helical transmembrane segment at 686–706 (GGVIFIGCGFLIMNVCLLIAV) threads the bilayer. Over 707 to 798 (RREWGKKRRN…QAPTLEEIQV (92 aa)) the chain is Cytoplasmic. Positions 731 to 765 (HGGGAEQYNSLNSPEPLLSASHKNSTSMRPAGISP) are disordered.

The protein belongs to the type-B carboxylesterase/lipase family. Interacts (via extracellular domain) with isoform b of madd-4; the interaction is required for the localization to postsynaptic domains. Interacts with unc-49.

It is found in the cell membrane. It localises to the synapse. Functionally, probable neuronal cell surface protein thought to be involved in cell-cell-interactions by forming intercellular junctions through binding to beta-neurexins. Plays a role in the clustering of the GABA(A) receptor unc-49 at postsynaptic sites in neuromuscular junctions (NMJs) via the interaction with madd-4 and neurexin nrx-1 and is thereby required for normal GABAergic synaptic transmission. In Caenorhabditis elegans, this protein is Neuroligin-1 (nlg-1).